Reading from the N-terminus, the 484-residue chain is Vanillin dehydrogenase (484 aa).

NADP(+)-binding positions include 156 to 157 (WN), 180 to 183 (KPAS), and 234 to 235 (GS). NAD(+) is bound by residues Lys180 and 234-239 (GSTPVG). The active-site Proton acceptor is Glu258. Leu259 serves as a coordination point for NADP(+). Cys292 serves as the catalytic Nucleophile. Residues Gln339 and Glu386 each coordinate NAD(+). Glu386 contacts NADP(+).

Belongs to the aldehyde dehydrogenase family. In terms of assembly, exists as a homodimer, homotrimer and homotetramer.

It catalyses the reaction vanillin + NAD(+) + H2O = vanillate + NADH + 2 H(+). The catalysed reaction is vanillin + NADP(+) + H2O = vanillate + NADPH + 2 H(+). It carries out the reaction 3,4-dihydroxybenzaldehyde + NAD(+) + H2O = 3,4-dihydroxybenzoate + NADH + 2 H(+). The enzyme catalyses 3,4-dihydroxybenzaldehyde + NADP(+) + H2O = 3,4-dihydroxybenzoate + NADPH + 2 H(+). It catalyses the reaction 4-hydroxybenzaldehyde + NAD(+) + H2O = 4-hydroxybenzoate + NADH + 2 H(+). The catalysed reaction is 4-hydroxybenzaldehyde + NADP(+) + H2O = 4-hydroxybenzoate + NADPH + 2 H(+). Functionally, catalyzes oxidation of vanillin to vanillate. Also oxidizes 3,4-dihydroxybenzaldehyde and 4-hydroxybenzaldehyde significantly. Other aromatic aldehyde substrates in the order of decreasing activity include 3-hydroxybenzaldehyde, 4-nitrobenzaldehyde, terephthalaldehyde, 2,4-dichlorobenzaldehyde, benzaldehyde and 3-phenylpropanal. Low activity with phthalaldehyde, cinnamaldehyde and syringaldehyde. No activity with phenylacetaldehyde, formaldehyde or aldehyde. Active with both NAD(+) and NADP(+). Involved in the degradation pathway of lignin-derived aromatic compounds of plant cell walls. Catalyzes the conversion of vanillin to vanillate due to toxicity of vanillin to the cells. This is Vanillin dehydrogenase from Corynebacterium glutamicum (strain ATCC 13032 / DSM 20300 / JCM 1318 / BCRC 11384 / CCUG 27702 / LMG 3730 / NBRC 12168 / NCIMB 10025 / NRRL B-2784 / 534).